The primary structure comprises 403 residues: Phosphopentomutase (403 aa).

6 residues coordinate Mn(2+): Asp-13, Asp-298, His-303, Asp-339, His-340, and His-351.

The protein belongs to the phosphopentomutase family. Requires Mn(2+) as cofactor.

It is found in the cytoplasm. It catalyses the reaction 2-deoxy-alpha-D-ribose 1-phosphate = 2-deoxy-D-ribose 5-phosphate. It carries out the reaction alpha-D-ribose 1-phosphate = D-ribose 5-phosphate. Its pathway is carbohydrate degradation; 2-deoxy-D-ribose 1-phosphate degradation; D-glyceraldehyde 3-phosphate and acetaldehyde from 2-deoxy-alpha-D-ribose 1-phosphate: step 1/2. Its function is as follows. Isomerase that catalyzes the conversion of deoxy-ribose 1-phosphate (dRib-1-P) and ribose 1-phosphate (Rib-1-P) to deoxy-ribose 5-phosphate (dRib-5-P) and ribose 5-phosphate (Rib-5-P), respectively. This chain is Phosphopentomutase, found in Streptococcus thermophilus.